We begin with the raw amino-acid sequence, 217 residues long: Probable transaldolase (217 aa).

The active-site Schiff-base intermediate with substrate is the lysine 83.

Belongs to the transaldolase family. Type 3B subfamily.

It is found in the cytoplasm. The enzyme catalyses D-sedoheptulose 7-phosphate + D-glyceraldehyde 3-phosphate = D-erythrose 4-phosphate + beta-D-fructose 6-phosphate. Its pathway is carbohydrate degradation; pentose phosphate pathway; D-glyceraldehyde 3-phosphate and beta-D-fructose 6-phosphate from D-ribose 5-phosphate and D-xylulose 5-phosphate (non-oxidative stage): step 2/3. Transaldolase is important for the balance of metabolites in the pentose-phosphate pathway. This chain is Probable transaldolase, found in Pseudothermotoga lettingae (strain ATCC BAA-301 / DSM 14385 / NBRC 107922 / TMO) (Thermotoga lettingae).